Here is a 233-residue protein sequence, read N- to C-terminus: Small ribosomal subunit protein uS3 (233 aa).

The KH type-2 domain maps to 39-107 (VRKYLTKELE…PAQINIAEVR (69 aa)). Residues 214-233 (VEQPEKPSAQPKKQQRKGRK) are disordered.

It belongs to the universal ribosomal protein uS3 family. Part of the 30S ribosomal subunit. Forms a tight complex with proteins S10 and S14.

Functionally, binds the lower part of the 30S subunit head. Binds mRNA in the 70S ribosome, positioning it for translation. The sequence is that of Small ribosomal subunit protein uS3 from Pectobacterium atrosepticum (strain SCRI 1043 / ATCC BAA-672) (Erwinia carotovora subsp. atroseptica).